The sequence spans 249 residues: Triosephosphate isomerase (249 aa).

8–10 (NWK) is a binding site for substrate. Histidine 95 functions as the Electrophile in the catalytic mechanism. Glutamate 163 (proton acceptor) is an active-site residue. Positions 169 and 209 each coordinate substrate.

This sequence belongs to the triosephosphate isomerase family. In terms of assembly, homodimer.

It localises to the cytoplasm. It catalyses the reaction D-glyceraldehyde 3-phosphate = dihydroxyacetone phosphate. Its pathway is carbohydrate biosynthesis; gluconeogenesis. It participates in carbohydrate degradation; glycolysis; D-glyceraldehyde 3-phosphate from glycerone phosphate: step 1/1. Its function is as follows. Involved in the gluconeogenesis. Catalyzes stereospecifically the conversion of dihydroxyacetone phosphate (DHAP) to D-glyceraldehyde-3-phosphate (G3P). This is Triosephosphate isomerase from Orientia tsutsugamushi (strain Ikeda) (Rickettsia tsutsugamushi).